Consider the following 253-residue polypeptide: ATP synthase subunit b 1 (253 aa).

The helical transmembrane segment at 5-27 (GWTVALQAVNFLILVLLLRHFLY) threads the bilayer.

This sequence belongs to the ATPase B chain family. As to quaternary structure, F-type ATPases have 2 components, F(1) - the catalytic core - and F(0) - the membrane proton channel. F(1) has five subunits: alpha(3), beta(3), gamma(1), delta(1), epsilon(1). F(0) has three main subunits: a(1), b(2) and c(10-14). The alpha and beta chains form an alternating ring which encloses part of the gamma chain. F(1) is attached to F(0) by a central stalk formed by the gamma and epsilon chains, while a peripheral stalk is formed by the delta and b chains.

It localises to the cell inner membrane. Functionally, f(1)F(0) ATP synthase produces ATP from ADP in the presence of a proton or sodium gradient. F-type ATPases consist of two structural domains, F(1) containing the extramembraneous catalytic core and F(0) containing the membrane proton channel, linked together by a central stalk and a peripheral stalk. During catalysis, ATP synthesis in the catalytic domain of F(1) is coupled via a rotary mechanism of the central stalk subunits to proton translocation. Component of the F(0) channel, it forms part of the peripheral stalk, linking F(1) to F(0). This Rhodospirillum centenum (strain ATCC 51521 / SW) protein is ATP synthase subunit b 1.